The following is a 94-amino-acid chain: Exodeoxyribonuclease 7 small subunit (94 aa).

The tract at residues 1 to 21 is disordered; sequence MPRAPNDAPSASATPSATPAS.

It belongs to the XseB family. In terms of assembly, heterooligomer composed of large and small subunits.

Its subcellular location is the cytoplasm. It catalyses the reaction Exonucleolytic cleavage in either 5'- to 3'- or 3'- to 5'-direction to yield nucleoside 5'-phosphates.. In terms of biological role, bidirectionally degrades single-stranded DNA into large acid-insoluble oligonucleotides, which are then degraded further into small acid-soluble oligonucleotides. This is Exodeoxyribonuclease 7 small subunit from Ralstonia pickettii (strain 12J).